The primary structure comprises 389 residues: MTTLPAKVLLLGSGELGKEVAIAAQRLGCHVIACDRYADAPAMQVADEAEVLAMTDREALLEVVRRHKPTVVIPEIEALAVNALAELEDEGLTVIPTARATAVTMNRDRIRDLAAGELALRTARFAYAASAEELHAEAPALGWPVVVKPVMSSSGKGQSVVDGPEGLNEAWEAAMANARGTSTHVIVEEFLRFDLEITLLTIRQRDGSTLFCPPIGHEQARGDYQCSWQPAALSDKQLSEAQAMARTVTDNLGGAGLFGVEFFLCGDEVIFSELSPRPHDTGLVTLISQNLNEFELHLRAVLGLPIPAIRCADAAASRVILADKHGSRVTYSGMEEALQESETSVFLFGKRDARPGRRMGVALARGEHQAEARAKADRSAAAVHLHIED.

Residues 15–16 and Glu75 contribute to the N(1)-(5-phospho-beta-D-ribosyl)glycinamide site; that span reads EL. ATP-binding positions include Arg107, Lys148, 153–158, 188–191, and Glu196; these read SSGKGQ and EEFL. The 191-residue stretch at 112–302 folds into the ATP-grasp domain; the sequence is DLAAGELALR…EFELHLRAVL (191 aa). Mg(2+) is bound by residues Glu261 and Glu273. N(1)-(5-phospho-beta-D-ribosyl)glycinamide is bound by residues Asp280, Lys350, and 357-358; that span reads RR.

Belongs to the PurK/PurT family. As to quaternary structure, homodimer.

The catalysed reaction is N(1)-(5-phospho-beta-D-ribosyl)glycinamide + formate + ATP = N(2)-formyl-N(1)-(5-phospho-beta-D-ribosyl)glycinamide + ADP + phosphate + H(+). It participates in purine metabolism; IMP biosynthesis via de novo pathway; N(2)-formyl-N(1)-(5-phospho-D-ribosyl)glycinamide from N(1)-(5-phospho-D-ribosyl)glycinamide (formate route): step 1/1. Its function is as follows. Involved in the de novo purine biosynthesis. Catalyzes the transfer of formate to 5-phospho-ribosyl-glycinamide (GAR), producing 5-phospho-ribosyl-N-formylglycinamide (FGAR). Formate is provided by PurU via hydrolysis of 10-formyl-tetrahydrofolate. The polypeptide is Formate-dependent phosphoribosylglycinamide formyltransferase (Synechococcus sp. (strain WH7803)).